A 537-amino-acid chain; its full sequence is RNA polymerase sigma-54 factor 2 (537 aa).

The interval 52-90 is disordered; sequence ANDEASGGEAPAEAGQFSDSDGGHNDEPGGGPGEAFEPG. The segment covering 55–66 has biased composition (low complexity); the sequence is EASGGEAPAEAG. Residues 403-422 constitute a DNA-binding region (H-T-H motif); that stretch reads NLKAVADAIQMHESTVSRVT. The RPON box motif lies at 492 to 500; that stretch reads ARRTVAKYR. A disordered region spans residues 507–537; the sequence is SSVQRRRDKQSALGNVLSTAMSDRSRNPEPA. Residues 518–528 are compositionally biased toward polar residues; it reads ALGNVLSTAMS.

Belongs to the sigma-54 factor family.

Sigma factors are initiation factors that promote the attachment of RNA polymerase to specific initiation sites and are then released. This sigma factor is responsible for the expression of the nitrogen fixation genes. This Bradyrhizobium diazoefficiens (strain JCM 10833 / BCRC 13528 / IAM 13628 / NBRC 14792 / USDA 110) protein is RNA polymerase sigma-54 factor 2 (rpoN2).